The primary structure comprises 352 residues: tRNA pseudouridine synthase D (352 aa).

Asp81 serves as the catalytic Nucleophile. In terms of domain architecture, TRUD spans 157–303 (GVPNYFGTQR…MDHERRILRL (147 aa)).

It belongs to the pseudouridine synthase TruD family.

It catalyses the reaction uridine(13) in tRNA = pseudouridine(13) in tRNA. Functionally, responsible for synthesis of pseudouridine from uracil-13 in transfer RNAs. The protein is tRNA pseudouridine synthase D of Pseudomonas putida (strain ATCC 700007 / DSM 6899 / JCM 31910 / BCRC 17059 / LMG 24140 / F1).